The primary structure comprises 342 residues: Fructose-1,6-bisphosphatase class 1 (342 aa).

4 residues coordinate Mg(2+): Glu-97, Asp-119, Leu-121, and Asp-122. Substrate-binding positions include 122-125 (DGSS), Asn-215, Tyr-247, and Lys-280. Residue Glu-286 coordinates Mg(2+).

The protein belongs to the FBPase class 1 family. As to quaternary structure, homotetramer. Mg(2+) is required as a cofactor.

It localises to the cytoplasm. It carries out the reaction beta-D-fructose 1,6-bisphosphate + H2O = beta-D-fructose 6-phosphate + phosphate. It functions in the pathway carbohydrate biosynthesis; gluconeogenesis. The protein is Fructose-1,6-bisphosphatase class 1 of Leptospira borgpetersenii serovar Hardjo-bovis (strain JB197).